The sequence spans 569 residues: Urease subunit alpha (569 aa).

One can recognise a Urease domain in the interval 131-569 (GGVDAHIHFI…VAMAQRYFLF (439 aa)). Ni(2+)-binding residues include His-136, His-138, and Lys-219. Lys-219 is modified (N6-carboxylysine). His-221 is a binding site for substrate. Ni(2+)-binding residues include His-248 and His-274. The Proton donor role is filled by His-322. Asp-362 is a binding site for Ni(2+).

It belongs to the metallo-dependent hydrolases superfamily. Urease alpha subunit family. In terms of assembly, heterotrimer of UreA (gamma), UreB (beta) and UreC (alpha) subunits. Three heterotrimers associate to form the active enzyme. Ni cation is required as a cofactor. Carboxylation allows a single lysine to coordinate two nickel ions.

Its subcellular location is the cytoplasm. It catalyses the reaction urea + 2 H2O + H(+) = hydrogencarbonate + 2 NH4(+). The protein operates within nitrogen metabolism; urea degradation; CO(2) and NH(3) from urea (urease route): step 1/1. This chain is Urease subunit alpha, found in Geobacillus kaustophilus (strain HTA426).